Consider the following 69-residue polypeptide: UPF0337 protein YjbJ (69 aa).

The protein belongs to the UPF0337 (CsbD) family.

The sequence is that of UPF0337 protein YjbJ (yjbJ) from Escherichia coli O6:H1 (strain CFT073 / ATCC 700928 / UPEC).